A 341-amino-acid polypeptide reads, in one-letter code: Heme A synthase (341 aa).

The next 8 helical transmembrane spans lie at 7 to 27 (VTVWLGVCCSMTLLMVVIGGI), 92 to 112 (LFGRALGAVFCLPIPYFAITK), 118 to 138 (MVAKLLMVALLGGMQGAMGWF), 159 to 179 (LFLTILLFSILWHSFLRCAGV), 190 to 210 (FFTAAAVVGLTVLQMVLGALV), 253 to 273 (FLHRLVAVLIVVCAAPLPFWL), 280 to 300 (LFLACVALQFLLGVATLVSVV), and 302 to 322 (IFLAAMHQVFGFVTLAAGVHM). Histidine 255 serves as a coordination point for heme. Heme is bound at residue histidine 308.

This sequence belongs to the COX15/CtaA family. Type 2 subfamily. In terms of assembly, interacts with CtaB. Heme b serves as cofactor.

It is found in the cell membrane. It catalyses the reaction Fe(II)-heme o + 2 A + H2O = Fe(II)-heme a + 2 AH2. Its pathway is porphyrin-containing compound metabolism; heme A biosynthesis; heme A from heme O: step 1/1. Catalyzes the conversion of heme O to heme A by two successive hydroxylations of the methyl group at C8. The first hydroxylation forms heme I, the second hydroxylation results in an unstable dihydroxymethyl group, which spontaneously dehydrates, resulting in the formyl group of heme A. This chain is Heme A synthase, found in Anaplasma marginale (strain Florida).